The chain runs to 207 residues: Dephospho-CoA kinase (207 aa).

Residues 10–207 form the DPCK domain; sequence ILGLTGGIGS…FYLTLRGGQS (198 aa). ATP is bound at residue 18-23; it reads GSGKSA.

The protein belongs to the CoaE family.

It localises to the cytoplasm. It catalyses the reaction 3'-dephospho-CoA + ATP = ADP + CoA + H(+). Its pathway is cofactor biosynthesis; coenzyme A biosynthesis; CoA from (R)-pantothenate: step 5/5. Its function is as follows. Catalyzes the phosphorylation of the 3'-hydroxyl group of dephosphocoenzyme A to form coenzyme A. In Pseudomonas savastanoi pv. phaseolicola (strain 1448A / Race 6) (Pseudomonas syringae pv. phaseolicola (strain 1448A / Race 6)), this protein is Dephospho-CoA kinase.